Here is an 812-residue protein sequence, read N- to C-terminus: Probable inorganic carbon transporter subunit DabA (812 aa).

Zn(2+)-binding residues include cysteine 338, aspartate 340, histidine 498, and cysteine 513.

It belongs to the inorganic carbon transporter (TC 9.A.2) DabA family. Forms a complex with DabB. It depends on Zn(2+) as a cofactor.

It is found in the cell inner membrane. Functionally, part of an energy-coupled inorganic carbon pump. The polypeptide is Probable inorganic carbon transporter subunit DabA (Methylobacterium sp. (strain 4-46)).